A 233-amino-acid polypeptide reads, in one-letter code: Octanoyltransferase (233 aa).

A BPL/LPL catalytic domain is found at 36–211; that stretch reads DTTPDEIWLV…EFTRQLGYPT (176 aa). Residues 75–82, 142–144, and 155–157 contribute to the substrate site; these read RGGQVTYH, SLG, and GLA. C173 functions as the Acyl-thioester intermediate in the catalytic mechanism.

The protein belongs to the LipB family.

It localises to the cytoplasm. The catalysed reaction is octanoyl-[ACP] + L-lysyl-[protein] = N(6)-octanoyl-L-lysyl-[protein] + holo-[ACP] + H(+). Its pathway is protein modification; protein lipoylation via endogenous pathway; protein N(6)-(lipoyl)lysine from octanoyl-[acyl-carrier-protein]: step 1/2. Functionally, catalyzes the transfer of endogenously produced octanoic acid from octanoyl-acyl-carrier-protein onto the lipoyl domains of lipoate-dependent enzymes. Lipoyl-ACP can also act as a substrate although octanoyl-ACP is likely to be the physiological substrate. This Yersinia pestis bv. Antiqua (strain Antiqua) protein is Octanoyltransferase.